The chain runs to 339 residues: MTIPSASKTLVTVYGATGSQGGSVARSLLQNTEFAVRAITRNASSTSAQNLKALGAEVVQADGWNKSQVQEAFSGSWAAFVNTNSEDPMFMSDDGPTEFDLGKIIIDGIVESGSVEHLVYSSAVSTSAFTQGEVTAKAAEMKSRVEKYAMATGYFKSVCPVYAGWYMELFNNTDFARVFGGFPKFPDAEGYLTLSTPRWGAKTDMPVPWVAVEKDFGDIVHGVLLAPERYHGKVIPALSDASSFPQVVDAFQSATGKNVRYVRQAKWDMFGAGIPELEDQRRLFHFGELTNGKYFGDEPTSTTVPAYLKAQAAKAKNKGVDDEAELLTLNQWFRSGFRQ.

An NADP(+)-binding site is contributed by lysine 142.

It belongs to the NmrA-type oxidoreductase family.

It catalyses the reaction didehydrocampesine A + 2 AH2 = campesine A + 2 A. It participates in alkaloid biosynthesis. Functionally, oxidoreductase; part of the gene cluster that mediates the biosynthesis of campesine G, a dimeric indole piperazine alkaloid that shows good insecticidal activity Galleria mellonella. Within the pathway, cpsB reduces the unstable (S,S)-trypyl-valyl dihydropiperazine (didehydrocampesine A) intermediate to (S, S)-trypyl-valyl-piperazine (campesine A) using two equivalents of NAD(P)H. The non-canonical non-ribosomal peptide synthetase cpsA catalyzes the first steps of the pathway by producing L-tryptophanal and L-valinal from their respective amino-acids. These products condensate spontaneously to form trypyl-valyl pyrazine also known as didehydrocampesine A. The NmrA-like family domain-containing oxidoreductase cpsB is the next enzyme in cps pathway and reduces the unstable didehydrocampesine A to campesine A. The methyltransferase cpsF and the acetyltransferase cpsE both recognize N13 of piperazine ring to carry out methylation and acetylation of campesine A to produce campesine C and B, respectively. The cytochrome P450 monooxygenase cpsD then acts as a dimerase that catalyzes oxidative heterocoupling between campesine B and C to produce heterodimers with unexpected 6/5/6/6/6/6/5/6 eight-ring scaffold called campesine D. Finally,the cytochrome P450 monooxygenase cpsC is a regioselective dehydrogenase that catalyzes dehydrogenation reaction towards C2-N1 to produce campesine G. In Aspergillus campestris (strain IBT 28561), this protein is NmrA-like family domain-containing oxidoreductase cpsB.